Here is a 282-residue protein sequence, read N- to C-terminus: HTH-type transcriptional activator RhaR (282 aa).

An HTH araC/xylS-type domain is found at 179 to 277 (DKLITALANS…GMTPSQWRHL (99 aa)). 2 DNA-binding regions (H-T-H motif) span residues 196 to 217 (DAFC…RAQT) and 244 to 267 (ISEI…TRET).

In terms of assembly, binds DNA as a dimer.

The protein resides in the cytoplasm. Activates expression of the rhaSR operon in response to L-rhamnose. This Salmonella typhimurium (strain LT2 / SGSC1412 / ATCC 700720) protein is HTH-type transcriptional activator RhaR.